A 130-amino-acid polypeptide reads, in one-letter code: uncharacterized protein (130 aa).

Residues 1–19 form the signal peptide; the sequence is MKVLGNILWWAFVGFMAYA.

This is an uncharacterized protein from Escherichia coli (strain K12).